Reading from the N-terminus, the 114-residue chain is Hydrogenase maturation factor HypA (114 aa).

H2 lines the Ni(2+) pocket. Zn(2+) is bound by residues C70, C73, C86, and C89.

This sequence belongs to the HypA/HybF family.

In terms of biological role, involved in the maturation of [NiFe] hydrogenases. Required for nickel insertion into the metal center of the hydrogenase. The sequence is that of Hydrogenase maturation factor HypA from Rippkaea orientalis (strain PCC 8801 / RF-1) (Cyanothece sp. (strain PCC 8801)).